The following is a 335-amino-acid chain: Phosphate acyltransferase (335 aa).

It belongs to the PlsX family. Homodimer. Probably interacts with PlsY.

It localises to the cytoplasm. The enzyme catalyses a fatty acyl-[ACP] + phosphate = an acyl phosphate + holo-[ACP]. Its pathway is lipid metabolism; phospholipid metabolism. Catalyzes the reversible formation of acyl-phosphate (acyl-PO(4)) from acyl-[acyl-carrier-protein] (acyl-ACP). This enzyme utilizes acyl-ACP as fatty acyl donor, but not acyl-CoA. The sequence is that of Phosphate acyltransferase from Brevibacillus brevis (strain 47 / JCM 6285 / NBRC 100599).